The following is a 150-amino-acid chain: Deoxyuridine 5'-triphosphate nucleotidohydrolase (150 aa).

Residues 68–70, asparagine 81, 85–87, and lysine 95 contribute to the substrate site; these read RSG and TID.

The protein belongs to the dUTPase family. Mg(2+) is required as a cofactor.

It carries out the reaction dUTP + H2O = dUMP + diphosphate + H(+). Its pathway is pyrimidine metabolism; dUMP biosynthesis; dUMP from dCTP (dUTP route): step 2/2. This enzyme is involved in nucleotide metabolism: it produces dUMP, the immediate precursor of thymidine nucleotides and it decreases the intracellular concentration of dUTP so that uracil cannot be incorporated into DNA. The sequence is that of Deoxyuridine 5'-triphosphate nucleotidohydrolase from Rickettsia bellii (strain OSU 85-389).